Reading from the N-terminus, the 380-residue chain is DNA replication and repair protein RecF (380 aa).

30–37 (GPNGFGKT) contributes to the ATP binding site.

The protein belongs to the RecF family.

The protein resides in the cytoplasm. Its function is as follows. The RecF protein is involved in DNA metabolism; it is required for DNA replication and normal SOS inducibility. RecF binds preferentially to single-stranded, linear DNA. It also seems to bind ATP. The protein is DNA replication and repair protein RecF of Mycobacterium sp. (strain KMS).